Reading from the N-terminus, the 407-residue chain is Phosphopentomutase (407 aa).

Positions 10, 306, 311, 347, 348, and 359 each coordinate Mn(2+).

It belongs to the phosphopentomutase family. Requires Mn(2+) as cofactor.

It localises to the cytoplasm. The enzyme catalyses 2-deoxy-alpha-D-ribose 1-phosphate = 2-deoxy-D-ribose 5-phosphate. It catalyses the reaction alpha-D-ribose 1-phosphate = D-ribose 5-phosphate. Its pathway is carbohydrate degradation; 2-deoxy-D-ribose 1-phosphate degradation; D-glyceraldehyde 3-phosphate and acetaldehyde from 2-deoxy-alpha-D-ribose 1-phosphate: step 1/2. Isomerase that catalyzes the conversion of deoxy-ribose 1-phosphate (dRib-1-P) and ribose 1-phosphate (Rib-1-P) to deoxy-ribose 5-phosphate (dRib-5-P) and ribose 5-phosphate (Rib-5-P), respectively. This is Phosphopentomutase from Serratia proteamaculans (strain 568).